Consider the following 523-residue polypeptide: Probable 3-ketoacyl-CoA synthase 20 (523 aa).

Helical transmembrane passes span 31 to 55 and 78 to 96; these read IVAV…AAGG and ALAV…YAAS. The 290-residue stretch at 93–382 folds into the FAE domain; it reads YAASRPRPVY…RFLATVVLKR (290 aa). Catalysis depends on residues cysteine 237, histidine 317, histidine 401, histidine 405, and asparagine 438.

It belongs to the thiolase-like superfamily. Chalcone/stilbene synthases family. Highly expressed in leaf sheaths. Expressed in leaves, flag leaves and panicles.

The protein resides in the membrane. The enzyme catalyses a very-long-chain acyl-CoA + malonyl-CoA + H(+) = a very-long-chain 3-oxoacyl-CoA + CO2 + CoA. Its function is as follows. Contributes to fatty acids elongation. Plays a role in controlling leaf anatomy and plant architecture. The polypeptide is Probable 3-ketoacyl-CoA synthase 20 (Oryza sativa subsp. japonica (Rice)).